The following is a 242-amino-acid chain: Ubiquitin-conjugating enzyme E2 6 (242 aa).

The Cytoplasmic portion of the chain corresponds to 1-220 (MASRQSQKRL…HSTPSFGVQR (220 aa)). A UBC core domain is found at 5–156 (QSQKRLTKEY…NQRFTKQFPD (152 aa)). C87 (glycyl thioester intermediate) is an active-site residue. The interval 170–190 (AREQAAATTDSTDPEKPFDVR) is disordered. Residues 221–240 (FTLVGVVVAAFIAAYFNFFS) form a helical membrane-spanning segment.

It belongs to the ubiquitin-conjugating enzyme family.

It localises to the endoplasmic reticulum membrane. The enzyme catalyses S-ubiquitinyl-[E1 ubiquitin-activating enzyme]-L-cysteine + [E2 ubiquitin-conjugating enzyme]-L-cysteine = [E1 ubiquitin-activating enzyme]-L-cysteine + S-ubiquitinyl-[E2 ubiquitin-conjugating enzyme]-L-cysteine.. It functions in the pathway protein modification; protein ubiquitination. Its function is as follows. Catalyzes the covalent attachment of ubiquitin to other proteins. Functions in degradation of misfolded or regulated proteins localized in the endoplasmic reticulum (ER) lumen or membrane via the ubiquitin-proteasome system. Cognate E2 conjugating enzyme for the DOA10 ubiquitin ligase complex, which is part of the ERAD-C pathway responsible for the rapid degradation of membrane proteins with misfolded cytoplasmic domains. In Debaryomyces hansenii (strain ATCC 36239 / CBS 767 / BCRC 21394 / JCM 1990 / NBRC 0083 / IGC 2968) (Yeast), this protein is Ubiquitin-conjugating enzyme E2 6 (UBC6).